Here is a 166-residue protein sequence, read N- to C-terminus: Interferon gamma (166 aa).

The N-terminal stretch at 1–23 is a signal peptide; it reads MKYTSYILALQLCVLLGFSGSYG. Q24 is modified (pyrrolidone carboxylic acid). N-linked (GlcNAc...) asparagine glycans are attached at residues N39 and N106.

This sequence belongs to the type II (or gamma) interferon family. As to quaternary structure, homodimer. Interacts with IFNGR1 (via extracellular domain); this interaction promotes IFNGR1 dimerization. In terms of tissue distribution, released primarily from activated T lymphocytes.

The protein localises to the secreted. Functionally, type II interferon produced by immune cells such as T-cells and NK cells that plays crucial roles in antimicrobial, antiviral, and antitumor responses by activating effector immune cells and enhancing antigen presentation. Primarily signals through the JAK-STAT pathway after interaction with its receptor IFNGR1 to affect gene regulation. Upon IFNG binding, IFNGR1 intracellular domain opens out to allow association of downstream signaling components JAK2, JAK1 and STAT1, leading to STAT1 activation, nuclear translocation and transcription of IFNG-regulated genes. Many of the induced genes are transcription factors such as IRF1 that are able to further drive regulation of a next wave of transcription. Plays a role in class I antigen presentation pathway by inducing a replacement of catalytic proteasome subunits with immunoproteasome subunits. In turn, increases the quantity, quality, and repertoire of peptides for class I MHC loading. Increases the efficiency of peptide generation also by inducing the expression of activator PA28 that associates with the proteasome and alters its proteolytic cleavage preference. Up-regulates as well MHC II complexes on the cell surface by promoting expression of several key molecules such as cathepsins B/CTSB, H/CTSH, and L/CTSL. Participates in the regulation of hematopoietic stem cells during development and under homeostatic conditions by affecting their development, quiescence, and differentiation. The polypeptide is Interferon gamma (IFNG) (Cervus elaphus (Red deer)).